The primary structure comprises 825 residues: Zinc finger protein 229 (825 aa).

Residues 1–26 (METLTSRHEKRALHSQASAISQDREE) form a disordered region. Residues 34 to 108 (LSFKDVAVVF…SHKELSSCKI (75 aa)) enclose the KRAB domain. The C2H2-type 1; degenerate zinc finger occupies 291-315 (KLCQYDEFSEGLRHSAHLNRHQRVP). 7 consecutive C2H2-type zinc fingers follow at residues 349–371 (YRCDVCGKGFRYKSVLLIHQGVH), 377–399 (YKCEECGKAFGRSSNLLVHQRVH), 405–427 (YKCSECGKGFSYSSVLQVHQRLH), 433–455 (YTCSECGKGFCAKSALHKHQHIH), 461–483 (YSCGECGKGFSCSSHLSSHQKTH), 489–511 (YQCDKCGKGFSHNSYLQAHQRVH), and 517–539 (YKCNVCGKSFSYSSGLLMHQRLH). A Glycyl lysine isopeptide (Lys-Gly) (interchain with G-Cter in SUMO2) cross-link involves residue K543. 10 consecutive C2H2-type zinc fingers follow at residues 545 to 566 (YKCECGKSFGRSSDLHIHQRVH), 572 to 594 (YKCSECGKGFRRNSDLHSHQRVH), 600 to 622 (YVCDVCGKGFIYSSDLLIHQRVH), 628 to 650 (YKCAECGKGFSYSSGLLIHQRVH), 656 to 678 (YRCQECGKGFRCTSSLHKHQRVH), 684 to 706 (YTCDQCGKGFSYGSNLRTHQRLH), 712 to 734 (YTCCECGKGFRYGSGLLSHKRVH), 740 to 762 (YRCHVCGKGYSQSSHLQGHQRVH), 768 to 790 (YKCEECGKGFGRNSCLHVHQRVH), and 796 to 818 (YTCGVCGKGFSYTSGLRNHQRVH).

This sequence belongs to the krueppel C2H2-type zinc-finger protein family.

It localises to the nucleus. In terms of biological role, may be involved in transcriptional regulation. The protein is Zinc finger protein 229 of Homo sapiens (Human).